The following is a 127-amino-acid chain: Competence protein ComGF (127 aa).

As to quaternary structure, the transformation pili are flexible filaments, consisting mainly of the major pilin ComGC and smaller amounts of the minor pilins, including at least ComGD, ComGF and ComGG. Interacts with ComGD. Interacts with ComGG.

It localises to the cell membrane. It is found in the fimbrium. Functionally, required for formation of the type IV-like pilus (T4P) that plays a role in transformation. Involved in transformation. Transformation pili are dynamically extended and retracted, perhaps thereby promoting DNA uptake and transformation. Required for transformation and DNA binding. The sequence is that of Competence protein ComGF (comGF) from Bacillus subtilis (strain 168).